A 286-amino-acid chain; its full sequence is 4-diphosphocytidyl-2-C-methyl-D-erythritol kinase (286 aa).

The active site involves Lys-11. Residue 93-103 (PFGAGLGGGSS) coordinates ATP. Asp-135 is an active-site residue.

This sequence belongs to the GHMP kinase family. IspE subfamily.

The catalysed reaction is 4-CDP-2-C-methyl-D-erythritol + ATP = 4-CDP-2-C-methyl-D-erythritol 2-phosphate + ADP + H(+). It functions in the pathway isoprenoid biosynthesis; isopentenyl diphosphate biosynthesis via DXP pathway; isopentenyl diphosphate from 1-deoxy-D-xylulose 5-phosphate: step 3/6. In terms of biological role, catalyzes the phosphorylation of the position 2 hydroxy group of 4-diphosphocytidyl-2C-methyl-D-erythritol. This Chlorobaculum tepidum (strain ATCC 49652 / DSM 12025 / NBRC 103806 / TLS) (Chlorobium tepidum) protein is 4-diphosphocytidyl-2-C-methyl-D-erythritol kinase.